An 890-amino-acid polypeptide reads, in one-letter code: Kinesin-like protein KIN-7C, mitochondrial (890 aa).

Residues methionine 1–serine 13 show a composition bias toward polar residues. Residues methionine 1 to alanine 66 form a disordered region. Residues methionine 1–lysine 73 constitute a mitochondrion transit peptide. Residues serine 40–alanine 66 are compositionally biased toward low complexity. The Kinesin motor domain occupies asparagine 75–valine 394. ATP is bound at residue glycine 155 to threonine 162. The stretch at glutamate 395 to leucine 468 forms a coiled coil. The tract at residues aspartate 511–isoleucine 595 is disordered. The segment covering serine 569–serine 579 has biased composition (low complexity). Coiled-coil stretches lie at residues histidine 664 to isoleucine 693 and alanine 729 to arginine 765. Residues threonine 768 to threonine 797 are disordered. A coiled-coil region spans residues asparagine 818–glutamate 884.

The protein belongs to the TRAFAC class myosin-kinesin ATPase superfamily. Kinesin family. KIN-7 subfamily.

It localises to the mitochondrion. This is Kinesin-like protein KIN-7C, mitochondrial from Arabidopsis thaliana (Mouse-ear cress).